A 706-amino-acid polypeptide reads, in one-letter code: Frizzled-6 (706 aa).

A signal peptide spans 1–18 (MEMFTFLLTCIFLPLLRG). One can recognise an FZ domain in the interval 19-132 (HSLFTCEPIT…CDRLQYCDET (114 aa)). Residues 19-201 (HSLFTCEPIT…SDELEFAKSF (183 aa)) are Extracellular-facing. 5 disulfides stabilise this stretch: C24-C85, C32-C78, C69-C106, C95-C129, and C99-C123. A glycan (N-linked (GlcNAc...) asparagine) is linked at N38. The helical transmembrane segment at 202-222 (IGTVSIFCLCATLFTFLTFLI) threads the bilayer. Residues 223 to 233 (DVRRFRYPERP) are Cytoplasmic-facing. The chain crosses the membrane as a helical span at residues 234-254 (IIYYSVCYSIVSLMYFIGFLL). Residues 255 to 284 (GDSTACNKADEKLELGDTVVLGSQNKACTV) are Extracellular-facing. Residues 285-305 (LFMLLYFFTMAGTVWWVILTI) traverse the membrane as a helical segment. Residues 306-324 (TWFLAAGRKWSCEAIEQKA) are Cytoplasmic-facing. A helical transmembrane segment spans residues 325–345 (VWFHAVAWGTPGFLTVMLLAM). Residues 346-370 (NKVEGDNISGVCFVGLYDLDASRYF) are Extracellular-facing. The N-linked (GlcNAc...) asparagine glycan is linked to N352. A helical membrane pass occupies residues 371 to 391 (VLLPLCLCVFVGLSLLLAGII). At 392 to 416 (SLNHVRQVIQHDGRNQEKLKKFMIR) the chain is on the cytoplasmic side. A helical transmembrane segment spans residues 417-437 (IGVFSGLYLVPLVTLLGCYVY). Over 438–473 (EQVNRITWEITWVSDHCRQYHIPCPYQAKAKARPEL) the chain is Extracellular. The helical transmembrane segment at 474-494 (ALFMIKYLMTLIVGISAVFWV) threads the bilayer. Topologically, residues 495 to 706 (GSKKTCTEWA…EQGGGCHSDT (212 aa)) are cytoplasmic. Residues 498–503 (KTCTEW) carry the Lys-Thr-X-X-X-Trp motif, mediates interaction with the PDZ domain of Dvl family members motif. The disordered stretch occupies residues 588 to 706 (EIQTSPETSM…EQGGGCHSDT (119 aa)). Positions 646–658 (ARSEGRISPKSDI) are enriched in basic and acidic residues. Position 653 is a phosphoserine (S653). Residues 662-672 (GLAQSNNLQVP) show a composition bias toward polar residues. Low complexity predominate over residues 673–685 (SSSEPSSLKGSTS). Over residues 694–706 (VRKEQGGGCHSDT) the composition is skewed to basic and acidic residues.

This sequence belongs to the G-protein coupled receptor Fz/Smo family. In terms of assembly, interacts with LMBR1L. Ubiquitinated by ZNRF3, leading to its degradation by the proteasome. Detected in adult heart, brain, placenta, lung, liver, skeletal muscle, kidney, pancreas, thymus, prostate, testis, ovary, small intestine and colon. In the fetus, expressed in brain, lung, liver and kidney.

The protein resides in the membrane. It is found in the cell membrane. Its subcellular location is the cell surface. The protein localises to the apical cell membrane. It localises to the cytoplasmic vesicle membrane. The protein resides in the endoplasmic reticulum membrane. In terms of biological role, receptor for Wnt proteins. Most of frizzled receptors are coupled to the beta-catenin canonical signaling pathway, which leads to the activation of disheveled proteins, inhibition of GSK-3 kinase, nuclear accumulation of beta-catenin and activation of Wnt target genes. A second signaling pathway involving PKC and calcium fluxes has been seen for some family members, but it is not yet clear if it represents a distinct pathway or if it can be integrated in the canonical pathway, as PKC seems to be required for Wnt-mediated inactivation of GSK-3 kinase. Both pathways seem to involve interactions with G-proteins. May be involved in transduction and intercellular transmission of polarity information during tissue morphogenesis and/or in differentiated tissues. Together with FZD3, is involved in the neural tube closure and plays a role in the regulation of the establishment of planar cell polarity (PCP), particularly in the orientation of asymmetric bundles of stereocilia on the apical faces of a subset of auditory and vestibular sensory cells located in the inner ear. The chain is Frizzled-6 (FZD6) from Homo sapiens (Human).